The following is a 361-amino-acid chain: Glutamine synthetase (361 aa).

In terms of domain architecture, GS beta-grasp spans 23 to 103 (CQAMYIWVDG…VLCETYKYNK (81 aa)). The GS catalytic domain maps to 110-361 (QRWKCMEVMT…LVRTICLNEQ (252 aa)). Glutamate 131 contacts ATP. Mn(2+) contacts are provided by glutamate 131, glutamate 133, and glutamate 200. 200–205 (EFQVGP) lines the ATP pocket. 243 to 244 (DW) is an L-glutamate binding site. Residue histidine 250 coordinates Mn(2+). ATP-binding positions include 252–254 (NFS), arginine 316, and arginine 321. Arginine 316 lines the L-glutamate pocket. Residue 333-335 (YLE) participates in ADP binding. Glutamate 335 provides a ligand contact to Mn(2+). Arginine 337 lines the L-glutamate pocket.

Belongs to the glutamine synthetase family. Requires Mg(2+) as cofactor. The cofactor is Mn(2+).

It localises to the cytoplasm. The protein localises to the cytosol. It is found in the microsome. The protein resides in the mitochondrion. The catalysed reaction is L-glutamate + NH4(+) + ATP = L-glutamine + ADP + phosphate + H(+). Glutamine synthetase that catalyzes the ATP-dependent conversion of glutamate and ammonia to glutamine. This is Glutamine synthetase from Panulirus argus (Caribbean spiny lobster).